Here is a 131-residue protein sequence, read N- to C-terminus: Small ribosomal subunit protein bS6 (131 aa).

The disordered stretch occupies residues 96 to 131 (VTAPSPMMKEEKSKSLLAKDEAAAPAPAPATEQATA). The segment covering 103-117 (MKEEKSKSLLAKDEA) has biased composition (basic and acidic residues). The span at 118–131 (AAPAPAPATEQATA) shows a compositional bias: low complexity.

This sequence belongs to the bacterial ribosomal protein bS6 family.

Binds together with bS18 to 16S ribosomal RNA. This chain is Small ribosomal subunit protein bS6, found in Methylobacillus flagellatus (strain ATCC 51484 / DSM 6875 / VKM B-1610 / KT).